Consider the following 177-residue polypeptide: Probable chemoreceptor glutamine deamidase CheD (177 aa).

Belongs to the CheD family.

It catalyses the reaction L-glutaminyl-[protein] + H2O = L-glutamyl-[protein] + NH4(+). In terms of biological role, probably deamidates glutamine residues to glutamate on methyl-accepting chemotaxis receptors (MCPs), playing an important role in chemotaxis. This is Probable chemoreceptor glutamine deamidase CheD from Pseudomonas syringae pv. syringae (strain B728a).